A 488-amino-acid chain; its full sequence is Ribulose bisphosphate carboxylase large chain (488 aa).

Substrate is bound by residues asparagine 127 and threonine 177. Lysine 179 serves as the catalytic Proton acceptor. Lysine 181 provides a ligand contact to substrate. Positions 205, 207, and 208 each coordinate Mg(2+). Lysine 205 carries the post-translational modification N6-carboxylysine. The active-site Proton acceptor is the histidine 297. Substrate contacts are provided by arginine 298, histidine 330, and serine 382.

The protein belongs to the RuBisCO large chain family. Type I subfamily. In terms of assembly, heterohexadecamer of 8 large chains and 8 small chains. The cofactor is Mg(2+).

It is found in the plastid. Its subcellular location is the chloroplast. It catalyses the reaction 2 (2R)-3-phosphoglycerate + 2 H(+) = D-ribulose 1,5-bisphosphate + CO2 + H2O. The enzyme catalyses D-ribulose 1,5-bisphosphate + O2 = 2-phosphoglycolate + (2R)-3-phosphoglycerate + 2 H(+). Functionally, ruBisCO catalyzes two reactions: the carboxylation of D-ribulose 1,5-bisphosphate, the primary event in carbon dioxide fixation, as well as the oxidative fragmentation of the pentose substrate in the photorespiration process. Both reactions occur simultaneously and in competition at the same active site. The polypeptide is Ribulose bisphosphate carboxylase large chain (Gracilaria tenuistipitata var. liui (Red alga)).